The chain runs to 239 residues: Ribonuclease 3 (239 aa).

Residues 12–137 (RAKLESLIGH…LIAAIYLDGG (126 aa)) enclose the RNase III domain. Residue Glu50 participates in Mg(2+) binding. The active site involves Asp54. Residues Asp123 and Glu126 each contribute to the Mg(2+) site. Glu126 is an active-site residue. The DRBM domain occupies 162-231 (DAKTELQEWS…ATKMLEREGI (70 aa)).

The protein belongs to the ribonuclease III family. As to quaternary structure, homodimer. It depends on Mg(2+) as a cofactor.

It localises to the cytoplasm. The enzyme catalyses Endonucleolytic cleavage to 5'-phosphomonoester.. Digests double-stranded RNA. Involved in the processing of primary rRNA transcript to yield the immediate precursors to the large and small rRNAs (23S and 16S). Processes some mRNAs, and tRNAs when they are encoded in the rRNA operon. Processes pre-crRNA and tracrRNA of type II CRISPR loci if present in the organism. The sequence is that of Ribonuclease 3 from Rhizobium etli (strain CIAT 652).